The chain runs to 567 residues: Sensor histidine kinase MtrB (567 aa).

The segment covering 1–15 has biased composition (basic residues); it reads MIFGSRRRIRGRRGR. Residues 1-20 are disordered; sequence MIFGSRRRIRGRRGRSGPMT. Helical transmembrane passes span 42 to 62 and 213 to 233; these read VVALTLGLSLAVILALGFVLT and GTMATGGLVLLVLLAGIALLV. One can recognise an HAMP domain in the interval 235-287; the sequence is RQVVVPVRSASRIAERFAEGHLSERMPVRGEDDMARLAVSFNDMAESLSRQIA. The Histidine kinase domain occupies 302–519; that stretch reads DVSHELRTPL…CFRLTLPLVR (218 aa). At His-305 the chain carries Phosphohistidine; by autocatalysis. The tract at residues 526-567 is disordered; that stretch reads SPLPMKPIPQPVLQPVAQPNPQPMPPEYKERQRPREHAEWSG. Residues 529–551 show a composition bias toward pro residues; the sequence is PMKPIPQPVLQPVAQPNPQPMPP. The segment covering 552-567 has biased composition (basic and acidic residues); it reads EYKERQRPREHAEWSG.

The protein localises to the cell membrane. It carries out the reaction ATP + protein L-histidine = ADP + protein N-phospho-L-histidine.. Functionally, member of the two-component regulatory system MtrA/MtrB. Seems to function as a membrane-associated protein kinase that phosphorylates MtrA in response to environmental signals. This is Sensor histidine kinase MtrB (mtrB) from Mycobacterium bovis (strain ATCC BAA-935 / AF2122/97).